Reading from the N-terminus, the 431-residue chain is uncharacterized protein (431 aa).

Disordered stretches follow at residues 1 to 37 (MFWR…KLTP) and 102 to 132 (PPPL…RRVA). The segment covering 22 to 32 (GDFRRSSDPRL) has biased composition (basic and acidic residues). Positions 106-121 (LSAGASRESAPRQPGP) are enriched in low complexity. The span at 122-132 (GERERPRRRVA) shows a compositional bias: basic and acidic residues.

Its subcellular location is the cytoplasm. This is an uncharacterized protein from Homo sapiens (Human).